Reading from the N-terminus, the 763-residue chain is Serine/threonine-protein kinase PknG (763 aa).

Residues 1-32 (MKREHMDHDTEDVGQAAQRADPPSGTTEGRLQ) are disordered. The Protein kinase domain occupies 160 to 406 (YEVKGCIAHG…SAEEMSAQLM (247 aa)). Residues 166–174 (IAHGGLGWV) and Lys190 each bind ATP. Asp289 serves as the catalytic Proton acceptor.

The protein belongs to the protein kinase superfamily. Ser/Thr protein kinase family. In terms of processing, autophosphorylated.

It catalyses the reaction L-seryl-[protein] + ATP = O-phospho-L-seryl-[protein] + ADP + H(+). The catalysed reaction is L-threonyl-[protein] + ATP = O-phospho-L-threonyl-[protein] + ADP + H(+). The polypeptide is Serine/threonine-protein kinase PknG (pknG) (Mycobacterium leprae (strain TN)).